The primary structure comprises 747 residues: Tegument protein UL46 homolog (747 aa).

Disordered stretches follow at residues 437 to 484 (FCCP…SPRT), 525 to 593 (QRSD…DYMR), 611 to 665 (TPYM…PEVV), and 689 to 747 (SASR…VSSL). Over residues 465–484 (LRSSRQLPTSPPSNIVSPRT) the composition is skewed to polar residues. A compositionally biased stretch (low complexity) spans 528–540 (DSSSSDNSTCSST). The segment covering 541–553 (ETQYITLPSTPSP) has biased composition (polar residues). 2 stretches are compositionally biased toward basic and acidic residues: residues 707–724 (VCRE…DGFI) and 736–747 (KHPDQTERVSSL).

It belongs to the herpesviridae HHV-1 VP11/12 protein family.

The protein localises to the virion tegument. The protein resides in the host cell membrane. Its function is as follows. Modulates alpha trans-inducing factor-dependent activation of alpha genes. This is Tegument protein UL46 homolog from Equine herpesvirus 1 (strain Ab4p) (EHV-1).